We begin with the raw amino-acid sequence, 247 residues long: Potassium channel Ftrac_2467 (247 aa).

Helical transmembrane passes span 23 to 44, 56 to 78, 89 to 117, 142 to 165, 187 to 210, and 215 to 237; these read TRIE…VLSS, SMRD…YQHY, KVTI…RFLS, LKLL…LMYW, SIIA…IDPW, and TTIL…GRIT. Positions 24-30 match the RxxxFSD motif motif; the sequence is RIETFSD.

This sequence belongs to the TMEM175 family. As to quaternary structure, homotetramer.

It is found in the cell membrane. It catalyses the reaction K(+)(in) = K(+)(out). Its function is as follows. Potassium channel; forms a potassium-permeable leak-like channel with weak selectivity for potassium. The channel is permeable for K(+), Rb(+) and Cs(+). The polypeptide is Potassium channel Ftrac_2467 (Marivirga tractuosa (strain ATCC 23168 / DSM 4126 / NBRC 15989 / NCIMB 1408 / VKM B-1430 / H-43) (Microscilla tractuosa)).